Here is a 91-residue protein sequence, read N- to C-terminus: Putative defensin-like protein 83 (91 aa).

The N-terminal stretch at 1 to 27 (MATNKFLSILLLSLMAFAAILLPMISG) is a signal peptide. 4 disulfides stabilise this stretch: Cys-32–Cys-71, Cys-37–Cys-57, Cys-43–Cys-69, and Cys-47–Cys-70.

The protein belongs to the DEFL family.

The protein resides in the secreted. The chain is Putative defensin-like protein 83 (LCR46) from Arabidopsis thaliana (Mouse-ear cress).